We begin with the raw amino-acid sequence, 208 residues long: N-(5'-phosphoribosyl)anthranilate isomerase (208 aa).

It belongs to the TrpF family.

It catalyses the reaction N-(5-phospho-beta-D-ribosyl)anthranilate = 1-(2-carboxyphenylamino)-1-deoxy-D-ribulose 5-phosphate. Its pathway is amino-acid biosynthesis; L-tryptophan biosynthesis; L-tryptophan from chorismate: step 3/5. In Natronomonas pharaonis (strain ATCC 35678 / DSM 2160 / CIP 103997 / JCM 8858 / NBRC 14720 / NCIMB 2260 / Gabara) (Halobacterium pharaonis), this protein is N-(5'-phosphoribosyl)anthranilate isomerase.